Consider the following 128-residue polypeptide: Large ribosomal subunit protein uL22 (128 aa).

The protein belongs to the universal ribosomal protein uL22 family. Part of the 50S ribosomal subunit.

In terms of biological role, this protein binds specifically to 23S rRNA; its binding is stimulated by other ribosomal proteins, e.g. L4, L17, and L20. It is important during the early stages of 50S assembly. It makes multiple contacts with different domains of the 23S rRNA in the assembled 50S subunit and ribosome. Its function is as follows. The globular domain of the protein is located near the polypeptide exit tunnel on the outside of the subunit, while an extended beta-hairpin is found that lines the wall of the exit tunnel in the center of the 70S ribosome. The protein is Large ribosomal subunit protein uL22 of Methylobacterium radiotolerans (strain ATCC 27329 / DSM 1819 / JCM 2831 / NBRC 15690 / NCIMB 10815 / 0-1).